We begin with the raw amino-acid sequence, 152 residues long: Deoxyuridine 5'-triphosphate nucleotidohydrolase (152 aa).

Residues 72 to 74 (RSG), Asn-85, and 89 to 91 (TID) contribute to the substrate site.

The protein belongs to the dUTPase family. The cofactor is Mg(2+).

The catalysed reaction is dUTP + H2O = dUMP + diphosphate + H(+). It participates in pyrimidine metabolism; dUMP biosynthesis; dUMP from dCTP (dUTP route): step 2/2. Its function is as follows. This enzyme is involved in nucleotide metabolism: it produces dUMP, the immediate precursor of thymidine nucleotides and it decreases the intracellular concentration of dUTP so that uracil cannot be incorporated into DNA. The sequence is that of Deoxyuridine 5'-triphosphate nucleotidohydrolase from Rhodopseudomonas palustris (strain BisB18).